Consider the following 778-residue polypeptide: Jhy protein homolog (778 aa).

Disordered stretches follow at residues 62 to 271 (DRIR…PKTD), 334 to 408 (QYES…LDTS), 631 to 654 (EKGK…QKRD), and 721 to 746 (IPKP…AGKE). Residues 118–139 (PIEDKYSDLRYDPNWKSKKEEG) are compositionally biased toward basic and acidic residues. Residues 223–234 (SSLSPYVKSSSS) show a composition bias toward low complexity. The span at 334–344 (QYESTKSSNVP) shows a compositional bias: polar residues. Residues 358-371 (SRRPAKLKIRKQCK) are compositionally biased toward basic residues. The segment covering 375–389 (GLKSSTTEEVTASQG) has biased composition (polar residues). Positions 390–402 (NQNNPPRQQQNQN) are enriched in low complexity. A compositionally biased stretch (basic residues) spans 633-650 (GKKHKKRSSSKNTKLKGY). Residues 733–746 (ASKEQKNPTYAGKE) are compositionally biased toward basic and acidic residues.

Its function is as follows. Required for the normal development of cilia in brain ependymal cells lining the ventricular surfaces. The polypeptide is Jhy protein homolog (Homo sapiens (Human)).